Reading from the N-terminus, the 1173-residue chain is 3-hydroxy-3-methylglutaryl coenzyme A reductase mlcD (1173 aa).

2 N-linked (GlcNAc...) asparagine glycosylation sites follow: N143 and N186. In terms of domain architecture, SSD spans 241 to 420 (DVVVMVLGYI…FTFYTAILSI (180 aa)). 7 consecutive transmembrane segments (helical) span residues 242-262 (VVVM…LFLS), 272-292 (LATS…DVAI), 302-322 (LLSE…SITL), 368-388 (NIVC…VLGI), 397-417 (VLAA…YTAI), 479-499 (FWMV…TLFQ), and 594-614 (VLSK…SYLF). A linker region spans residues 498–673 (FQASSSGSLS…FTPTTTDSDS (176 aa)). Residues 647-666 (NQTPQIQSSLQAPQTRVFTP) show a composition bias toward polar residues. The interval 647–669 (NQTPQIQSSLQAPQTRVFTPTTT) is disordered. A catalytic region spans residues 674–1133 (DASLVLIKAS…LVKAHMAHNR (460 aa)). The Charge relay system role is filled by E822. Residue N886 is glycosylated (N-linked (GlcNAc...) asparagine). K956 functions as the Charge relay system in the catalytic mechanism. N997 carries N-linked (GlcNAc...) asparagine glycosylation. D1032 (charge relay system) is an active-site residue. The active-site Proton donor is the H1128. N1132 carries an N-linked (GlcNAc...) asparagine glycan. A disordered region spans residues 1132 to 1173 (NRSAPASSAPSRSVSPSGGTRTVPVPNNALRPSAAATDRARR). The span at 1133–1148 (RSAPASSAPSRSVSPS) shows a compositional bias: low complexity.

It belongs to the HMG-CoA reductase family.

The protein resides in the endoplasmic reticulum membrane. The enzyme catalyses (R)-mevalonate + 2 NADP(+) + CoA = (3S)-3-hydroxy-3-methylglutaryl-CoA + 2 NADPH + 2 H(+). The protein operates within polyketide biosynthesis. In terms of biological role, HMG-CoA reductase; part of the gene cluster that mediates the biosynthesis of compactin, also known as mevastatin or ML-236B, and which acts as a potent competitive inhibitor of HMG-CoA reductase. Compactin biosynthesis is performed in two stages. The first stage is catalyzed by the nonaketide synthase mlcA, which belongs to type I polyketide synthases and catalyzes the iterative nine-step formation of the polyketide. This PKS stage is completed by the action of dehydrogenase mlcG, which catalyzes the NADPH-dependent reduction of the unsaturated tetra-, penta- and heptaketide intermediates that arise during the mlcA-mediated biosynthesis of the nonaketide chain and leads to dihydro-ML-236C carboxylate. Covalently bound dihydro-ML-236C carboxylate is released from mlcA by the mlcF esterase. Conversion of dihydro-ML-236C carboxylate into ML-236A carboxylate is subsequently performed with the participation of molecular oxygen and P450 monoogygenase mlcC. Finally, mlcH performs the conversion of ML-236A carboxylate to ML-236B/compactin carboxylate through the addition of the side-chain diketide moiety produced by the diketide synthase mlcB. HMG-CoA reductase mlcD may act as a down-regulator of compactin production and is involved in conferring resistance to ML-236B/compactin. In Penicillium citrinum, this protein is 3-hydroxy-3-methylglutaryl coenzyme A reductase mlcD.